The chain runs to 883 residues: MNEQYSALRSNVSMLGKVLGETIKDALGEHILDRVETIRKLSKSSRAGNEANRQELLTTLQNLSNDELLPVARAFSQFLNLANTAEQYHSISPKGEAASNPEVIARTLRKLKNQPDLNDATIKKAVESLSLELVLTAHPTEITRRTLIHKMGEINNCLKQLDNTDIADYERHQVMRRLRQLIAQSWHTDEIRKQRPSPVDEAKWGFAVVENSLWQGVPNYLRELNEQLEENLGYKLPVDFVPVRFTSWMGGDRDGNPNVTADITRHVLLLSRWKATDLFLKDIHVLVSELSMVDATPELLALVGEEGASEPYRYLMKKLRARLMATQSWLEARLKGEKLPKPAGLLTQNEQLWEPLYACYQSLQACGMGIIANGELLDTLRRVKCFGVPLVRIDIRQESTRHTEALGEITRYLGIGDYESWSEADKQAFLIRELNSKRPLLPRNWEPSNDTREVLETCKVIAEAPKGSIAAYVISMAKTPSDVLAVHLLLKEAGIGFAMPVAPLFETLDDLNNADDVMTQLLNIDWYRGLIQGKQMVMIGYSDSAKDAGVMAASWAQYQAQDALIKTCEKAGIELTLFHGRGGSIGRGGAPAHAALLSQPPGSLKGGLRVTEQGEMIRFKYGLPEVTVSSLSLYTSAILEANLLPPPEPKDSWRHIMDELSVISCETYRGYVRENKDFVPYFRSATPEQELGKLPLGSRPAKRRPTGGVESLRAIPWIFAWTQNRLMLPAWLGAGTALQKVVEDGKQSELEAMCRDWPFFSTRLGMLEMVFSKADLWLADYYDQRLVAKTLWPLGKELRDLLEEDIKVVLAIANDSHLMADLPWIAESIQLRNVYTDPLNVLQAELLYRSRLTEEQGKSPDPRVEQALMVTIAGVAAGMRNTG.

Active-site residues include H138 and K546.

This sequence belongs to the PEPCase type 1 family. The cofactor is Mg(2+).

It carries out the reaction oxaloacetate + phosphate = phosphoenolpyruvate + hydrogencarbonate. Its function is as follows. Forms oxaloacetate, a four-carbon dicarboxylic acid source for the tricarboxylic acid cycle. The sequence is that of Phosphoenolpyruvate carboxylase from Salmonella dublin (strain CT_02021853).